The following is a 513-amino-acid chain: Maturase K (513 aa).

It belongs to the intron maturase 2 family. MatK subfamily.

The protein resides in the plastid. The protein localises to the chloroplast. Its function is as follows. Usually encoded in the trnK tRNA gene intron. Probably assists in splicing its own and other chloroplast group II introns. This chain is Maturase K, found in Astrebla lappacea (Curly Mitchell grass).